A 237-amino-acid polypeptide reads, in one-letter code: tRNA (guanine-N(7)-)-methyltransferase (237 aa).

4 residues coordinate S-adenosyl-L-methionine: D35, E60, N87, and D113. D113 is an active-site residue. Substrate-binding residues include K117 and D149.

Belongs to the class I-like SAM-binding methyltransferase superfamily. TrmB family.

The catalysed reaction is guanosine(46) in tRNA + S-adenosyl-L-methionine = N(7)-methylguanosine(46) in tRNA + S-adenosyl-L-homocysteine. Its pathway is tRNA modification; N(7)-methylguanine-tRNA biosynthesis. Its function is as follows. Catalyzes the formation of N(7)-methylguanine at position 46 (m7G46) in tRNA. This is tRNA (guanine-N(7)-)-methyltransferase from Synechococcus sp. (strain CC9311).